Consider the following 469-residue polypeptide: Interstitial collagenase (469 aa).

Positions 1-19 (MHSFPPLLLLLFWGVVSHS) are cleaved as a signal peptide. The propeptide at 20–99 (FPATLETQEQ…PRCGVPDVAQ (80 aa)) is activation peptide. Ser-57 is subject to Phosphoserine. The Cysteine switch signature appears at 90–97 (PRCGVPDV). Cys-92 contacts Zn(2+). The tract at residues 98-276 (AQFVLTEGNP…VQPIGPQTPK (179 aa)) is metalloprotease. Residue Asn-120 is glycosylated (N-linked (GlcNAc...) asparagine). Asp-124 and Asp-158 together coordinate Ca(2+). Zn(2+) contacts are provided by His-168 and Asp-170. Residues Asp-175, Gly-176, Gly-178, and Asn-180 each coordinate Ca(2+). His-183 provides a ligand contact to Zn(2+). Ca(2+) contacts are provided by Gly-190, Gly-192, and Asp-194. His-196 contributes to the Zn(2+) binding site. 3 residues coordinate Ca(2+): Asp-198, Glu-199, and Glu-201. Residue His-218 participates in Zn(2+) binding. The active site involves Glu-219. 2 residues coordinate Zn(2+): His-222 and His-228. Thr-274 is modified (phosphothreonine). 4 Hemopexin repeats span residues 275–324 (PKAC…WPQL), 325–371 (PNGL…FGFP), 374–422 (VKHI…FPGI), and 423–466 (GHKV…WFNC). Cys-278 and Cys-466 are joined by a disulfide. Residues Asp-285 and Glu-329 each coordinate Ca(2+). Tyr-360 is subject to Phosphotyrosine; by PKDCC. Asp-378 and Asp-427 together coordinate Ca(2+).

Belongs to the peptidase M10A family. In terms of assembly, (Microbial infection) Interacts with HIV-1 Tat. The cofactor is Ca(2+). Requires Zn(2+) as cofactor. Undergoes autolytic cleavage to two major forms (22 kDa and 27 kDa). A minor form (25 kDa) is the glycosylated form of the 22 kDa form. The 27 kDa form has no activity while the 22/25 kDa form can act as activator for collagenase. In terms of processing, tyrosine phosphorylated in platelets by PKDCC/VLK.

The protein resides in the secreted. Its subcellular location is the extracellular space. It localises to the extracellular matrix. It carries out the reaction Cleavage of the triple helix of collagen at about three-quarters of the length of the molecule from the N-terminus, at 775-Gly-|-Ile-776 in the alpha1(I) chain. Cleaves synthetic substrates and alpha-macroglobulins at bonds where P1' is a hydrophobic residue.. Can be activated without removal of the activation peptide. Functionally, cleaves collagens of types I, II, and III at one site in the helical domain. Also cleaves collagens of types VII and X. In case of HIV infection, interacts and cleaves the secreted viral Tat protein, leading to a decrease in neuronal Tat's mediated neurotoxicity. The chain is Interstitial collagenase (MMP1) from Homo sapiens (Human).